The sequence spans 380 residues: MMTSTFGTTVKVSIFGESHAPKIGCTIEGLPAGFTVDLHELKTFLQRRSPSHPWDTPRKEIDNPKFVSGISAKGILDGFPLTAELPNNNVRQKDYTATKLVPRPGHADFSAWAKWGNSYKQTGGGHFSARLTAPLCIAGGIALQILHAQGITIAAHVLKIKNINDTPFKLIDNSVEANKLLALQMNQLLQAAPQELPFLDAQTGEKTRALLTQLRSEKNTVGGIIECVATGVPAGIGCPHFQGLENTISAAVFGVPAVKAIEFGSGMNVANLLGSENNDAYEVRDGSVVPTTNHAGGILGGISTGAPIWFRCALKPISSIGLSQHSVNLQTMESEQLVVQGRHDVTAVLRAVPCVESAFALALLDTLYSWPSEQNGYHND.

NADP(+) is bound at residue Arg-48. FMN-binding positions include 126–128, Gly-300, 315–319, and Arg-342; these read HFS and KPISS.

This sequence belongs to the chorismate synthase family. In terms of assembly, homotetramer. Requires FMNH2 as cofactor.

The enzyme catalyses 5-O-(1-carboxyvinyl)-3-phosphoshikimate = chorismate + phosphate. The protein operates within metabolic intermediate biosynthesis; chorismate biosynthesis; chorismate from D-erythrose 4-phosphate and phosphoenolpyruvate: step 7/7. Its function is as follows. Catalyzes the anti-1,4-elimination of the C-3 phosphate and the C-6 proR hydrogen from 5-enolpyruvylshikimate-3-phosphate (EPSP) to yield chorismate, which is the branch point compound that serves as the starting substrate for the three terminal pathways of aromatic amino acid biosynthesis. This reaction introduces a second double bond into the aromatic ring system. The protein is Chorismate synthase of Lancefieldella parvula (strain ATCC 33793 / DSM 20469 / CCUG 32760 / JCM 10300 / KCTC 3663 / VPI 0546 / 1246) (Atopobium parvulum).